The chain runs to 407 residues: Phospholipid-transporting ATPase accessory subunit CDC50 (407 aa).

A disordered region spans residues 1 to 33; sequence MAPRRRRGAGQDGSDDGRSDSDAPKNRPPNTAF. The Cytoplasmic portion of the chain corresponds to 1 to 48; sequence MAPRRRRGAGQDGSDDGRSDSDAPKNRPPNTAFRQQRMRAWQCVLTPK. The span at 15 to 25 shows a compositional bias: basic and acidic residues; the sequence is DDGRSDSDAPK. Residues 49 to 69 traverse the membrane as a helical segment; sequence LIVTVFSILAAIYLGFGAWLT. The Extracellular segment spans residues 70–359; it reads YLAHTVRDLK…TMGSRNIWPG (290 aa). An intrachain disulfide couples Cys85 to Cys139. N-linked (GlcNAc...) asparagine glycans are attached at residues Asn131 and Asn189. An intrachain disulfide couples Cys193 to Cys210. 4 N-linked (GlcNAc...) asparagine glycosylation sites follow: Asn219, Asn232, Asn241, and Asn314. The chain crosses the membrane as a helical span at residues 360 to 380; that stretch reads IIFLIVGGICLVLDIYFILSF. At 381 to 407 the chain is on the cytoplasmic side; sequence FIWRPRKLGDPSYLSWNQPSAPGGHSS.

It belongs to the CDC50/LEM3 family. In terms of assembly, component of a flippase complex consisting of DNF1 and CDC50. Interacts with DNF1; the interaction is direct.

The protein localises to the cell membrane. Its function is as follows. Accessory component of a P4-ATPase flippase complex which catalyzes the hydrolysis of ATP coupled to the transport of phosphatidylcholine and phosphatidylserine from the lumen to the cytosolic leaflet of membranes and ensures the maintenance of asymmetric distribution of phospholipids. This is Phospholipid-transporting ATPase accessory subunit CDC50 from Chaetomium thermophilum (strain DSM 1495 / CBS 144.50 / IMI 039719) (Thermochaetoides thermophila).